Consider the following 121-residue polypeptide: uncharacterized protein (121 aa).

The disordered stretch occupies residues 1-121 (MGQVLSICSS…QQEREQIKWD (121 aa)). Gly-2 carries N-myristoyl glycine lipidation. Cys-8 is lipidated: S-palmitoyl cysteine. Basic and acidic residues-rich tracts occupy residues 11 to 23 (KSKEKKVVNEKPT), 73 to 83 (AAEKRNIEKKK), 90 to 105 (RQLEKERAKPMKEHLQ), and 112 to 121 (QQEREQIKWD).

To yeast YGL108C. Myristoylated. In terms of processing, the N-myristoylated protein is further palmitoylated.

The protein resides in the cytoplasm. The protein localises to the cytosol. This is an uncharacterized protein from Schizosaccharomyces pombe (strain 972 / ATCC 24843) (Fission yeast).